Here is a 313-residue protein sequence, read N- to C-terminus: Malate dehydrogenase (313 aa).

NAD(+)-binding positions include Gly-11 to Gly-16 and Asp-35. Substrate contacts are provided by Arg-84 and Arg-90. Residues Asn-97 and Val-120–Asn-122 each bind NAD(+). 2 residues coordinate substrate: Asn-122 and Arg-153. Residue His-177 is the Proton acceptor of the active site.

It belongs to the LDH/MDH superfamily. MDH type 3 family.

It catalyses the reaction (S)-malate + NAD(+) = oxaloacetate + NADH + H(+). Its function is as follows. Catalyzes the reversible oxidation of malate to oxaloacetate. In Ehrlichia ruminantium (strain Welgevonden), this protein is Malate dehydrogenase.